The chain runs to 338 residues: D-erythrose-4-phosphate dehydrogenase (338 aa).

Arg11–Ile12 is a binding site for NAD(+). Residues Ser153–Thr155, Arg199, Thr212–Lys213, and Arg235 contribute to the substrate site. Cys154 (nucleophile) is an active-site residue. Asn317 contributes to the NAD(+) binding site.

The protein belongs to the glyceraldehyde-3-phosphate dehydrogenase family. Epd subfamily. Homotetramer.

The protein resides in the cytoplasm. The catalysed reaction is D-erythrose 4-phosphate + NAD(+) + H2O = 4-phospho-D-erythronate + NADH + 2 H(+). The protein operates within cofactor biosynthesis; pyridoxine 5'-phosphate biosynthesis; pyridoxine 5'-phosphate from D-erythrose 4-phosphate: step 1/5. In terms of biological role, catalyzes the NAD-dependent conversion of D-erythrose 4-phosphate to 4-phosphoerythronate. In Shewanella oneidensis (strain ATCC 700550 / JCM 31522 / CIP 106686 / LMG 19005 / NCIMB 14063 / MR-1), this protein is D-erythrose-4-phosphate dehydrogenase.